Consider the following 127-residue polypeptide: Large ribosomal subunit protein bL17 (127 aa).

Belongs to the bacterial ribosomal protein bL17 family. In terms of assembly, part of the 50S ribosomal subunit. Contacts protein L32.

In Fervidobacterium nodosum (strain ATCC 35602 / DSM 5306 / Rt17-B1), this protein is Large ribosomal subunit protein bL17.